A 703-amino-acid polypeptide reads, in one-letter code: Elongation factor G 2 (703 aa).

In terms of domain architecture, tr-type G spans E8–S291. GTP contacts are provided by residues A17–T24, D89–H93, and N143–D146.

Belongs to the TRAFAC class translation factor GTPase superfamily. Classic translation factor GTPase family. EF-G/EF-2 subfamily.

It localises to the cytoplasm. Functionally, catalyzes the GTP-dependent ribosomal translocation step during translation elongation. During this step, the ribosome changes from the pre-translocational (PRE) to the post-translocational (POST) state as the newly formed A-site-bound peptidyl-tRNA and P-site-bound deacylated tRNA move to the P and E sites, respectively. Catalyzes the coordinated movement of the two tRNA molecules, the mRNA and conformational changes in the ribosome. In Pseudomonas putida (strain ATCC 47054 / DSM 6125 / CFBP 8728 / NCIMB 11950 / KT2440), this protein is Elongation factor G 2 (fusB).